The sequence spans 93 residues: Large ribosomal subunit protein bL27 (93 aa).

The propeptide occupies 1–8 (MIMDLQFF). Positions 8 to 29 (FSHHKGGGSTANGRNSAGRRLG) are disordered.

Belongs to the bacterial ribosomal protein bL27 family. Post-translationally, the N-terminus is cleaved by ribosomal processing cysteine protease Prp.

This is Large ribosomal subunit protein bL27 from Limosilactobacillus fermentum (strain NBRC 3956 / LMG 18251) (Lactobacillus fermentum).